The primary structure comprises 325 residues: Germination protease (325 aa).

The propeptide occupies 1–7; it reads MYNVRTD.

It belongs to the peptidase A25 family. Homotetramer. Autoproteolytically processed. The inactive tetrameric zymogen termed p46 autoprocesses to a smaller form termed p41, which is active only during spore germination.

The catalysed reaction is Endopeptidase action with P4 Glu or Asp, P1 preferably Glu &gt; Asp, P1' hydrophobic and P2' Ala.. Initiates the rapid degradation of small, acid-soluble proteins during spore germination. The polypeptide is Germination protease (Clostridium perfringens (strain ATCC 13124 / DSM 756 / JCM 1290 / NCIMB 6125 / NCTC 8237 / Type A)).